A 425-amino-acid polypeptide reads, in one-letter code: Serine--tRNA ligase (425 aa).

T231 to E233 is a binding site for L-serine. R262–E264 provides a ligand contact to ATP. E285 is a binding site for L-serine. Residue E349–S352 coordinates ATP. S385 is an L-serine binding site.

The protein belongs to the class-II aminoacyl-tRNA synthetase family. Type-1 seryl-tRNA synthetase subfamily. As to quaternary structure, homodimer. The tRNA molecule binds across the dimer.

It localises to the cytoplasm. The enzyme catalyses tRNA(Ser) + L-serine + ATP = L-seryl-tRNA(Ser) + AMP + diphosphate + H(+). It catalyses the reaction tRNA(Sec) + L-serine + ATP = L-seryl-tRNA(Sec) + AMP + diphosphate + H(+). The protein operates within aminoacyl-tRNA biosynthesis; selenocysteinyl-tRNA(Sec) biosynthesis; L-seryl-tRNA(Sec) from L-serine and tRNA(Sec): step 1/1. Its function is as follows. Catalyzes the attachment of serine to tRNA(Ser). Is also able to aminoacylate tRNA(Sec) with serine, to form the misacylated tRNA L-seryl-tRNA(Sec), which will be further converted into selenocysteinyl-tRNA(Sec). This chain is Serine--tRNA ligase, found in Bartonella tribocorum (strain CIP 105476 / IBS 506).